The sequence spans 435 residues: Nuclear receptor subfamily 6 group A member 1 (435 aa).

Positions 11 to 86 form a DNA-binding region, nuclear receptor; the sequence is QRACLICGDR…MGMNRKAIRE (76 aa). 2 NR C4-type zinc fingers span residues 14–34 and 50–69; these read CLICGDRATGLHYGIISCEGC and CSRDKNCVMSRKQRNRCQYC. The interval 84–157 is disordered; that stretch reads IREDGMPGGR…VSTPSSSRSM (74 aa). Positions 121–141 are enriched in polar residues; the sequence is NTSWSNNGDSDHSSPGNGVSE. Positions 142–156 are enriched in low complexity; it reads SNQPSPVSTPSSSRS. An NR LBD domain is found at 204 to 435; that stretch reads QSHTLINQLL…HSCKTSLTKE (232 aa).

This sequence belongs to the nuclear hormone receptor family. NR6 subfamily. Homodimer.

It is found in the cytoplasm. It localises to the nucleus. Its function is as follows. Probable orphan nuclear receptor. Binds to a response element containing repeats of the motif 5'-AGGTCA-3'. Required for anterior-posterior patterning during organogenesis. Acts with chordin to play a role in patterning the midbrain-hindbrain. Isoform Em is required for integrin-mediated cell matrix interaction during neurulation and for the morphogenetic movements leading to formation of the neural tube. Also mediates the effect of retinoic acid on primary neurogenesis. The sequence is that of Nuclear receptor subfamily 6 group A member 1 from Xenopus tropicalis (Western clawed frog).